A 3313-amino-acid chain; its full sequence is Cadherin EGF LAG seven-pass G-type receptor 3 (3313 aa).

The first 31 residues, 1 to 31, serve as a signal peptide directing secretion; sequence MARRPLWWGLPGPSTPLLLLLLFSLFPSSRE. The Extracellular portion of the chain corresponds to 32–2538; sequence EMGGGGDQGW…RLEGDLELLA (2507 aa). 2 disordered regions span residues 148–187 and 205–269; these read LPLDALSPGDSDLRNSSPHPSELLAQPDSPRPVAFQRNGR and EPGH…RMRS. Basic and acidic residues predominate over residues 258 to 268; the sequence is HESRTAPERMR. 9 consecutive Cadherin domains span residues 317-424, 425-536, 537-642, 643-747, 748-849, 850-952, 953-1058, 1059-1160, and 1161-1257; these read PQYN…APVF, EQAQ…APQF, SEKR…SPIF, VSTP…RPEF, TMKE…RPVF, QSAH…APQF, VASH…APVF, PAEE…SPVL, and NNFQ…VVII. A glycan (N-linked (GlcNAc...) asparagine) is linked at Asn-623. N-linked (GlcNAc...) asparagine glycosylation is present at Asn-838. Residues Asn-1173, Asn-1213, Asn-1308, and Asn-1318 are each glycosylated (N-linked (GlcNAc...) asparagine). In terms of domain architecture, EGF-like 1; calcium-binding spans 1366–1424; the sequence is DDNVCLREPCENYMKCVSVLRFDSSAPFLASASTLFRPIQPIAGLRCRCPPGFTGDFCE. Cystine bridges form between Cys-1370–Cys-1381, Cys-1375–Cys-1412, Cys-1414–Cys-1423, Cys-1430–Cys-1441, Cys-1435–Cys-1450, Cys-1452–Cys-1461, Cys-1470–Cys-1481, Cys-1475–Cys-1491, and Cys-1493–Cys-1504. An EGF-like 2; calcium-binding domain is found at 1426–1462; sequence ELDLCYSNPCRNGGACARREGGYTCVCRPRFTGEDCE. Residues 1466–1505 enclose the EGF-like 3; calcium-binding domain; the sequence is EAGRCVPGVCRNGGTCTNAPNGGFRCQCPAGGAFEGPRCE. Positions 1506 to 1710 constitute a Laminin G-like 1 domain; it reads VAARSFPPSS…VANNGTTAGC (205 aa). Asn-1640 and Asn-1704 each carry an N-linked (GlcNAc...) asparagine glycan. 4 disulfides stabilise this stretch: Cys-1684–Cys-1710, Cys-1717–Cys-1728, Cys-1722–Cys-1737, and Cys-1739–Cys-1748. Positions 1713–1749 constitute an EGF-like 4; calcium-binding domain; the sequence is KSHFCASGPCKNGGLCSERWGGFSCDCPVGFGGKDCR. The Laminin G-like 2 domain maps to 1753 to 1935; the sequence is AHPYHFQGNG…SHRINVEPGC (183 aa). Residue Asn-1761 is glycosylated (N-linked (GlcNAc...) asparagine). 9 cysteine pairs are disulfide-bonded: Cys-1906–Cys-1935, Cys-1941–Cys-1952, Cys-1946–Cys-1961, Cys-1963–Cys-1972, Cys-1976–Cys-1987, Cys-1981–Cys-1999, Cys-2001–Cys-2010, Cys-2018–Cys-2031, and Cys-2033–Cys-2043. The region spanning 1937-1972 is the EGF-like 5; calcium-binding domain; the sequence is VTNPCASGPCPPHANCKDLWQTFSCTCWPGYYGPGC. Asp-1954 carries the (3R)-3-hydroxyaspartate modification. Residues 1973–2011 enclose the EGF-like 6; calcium-binding domain; it reads VDACLLNPCQNQGSCRHLQGGPHGYTCDCASGYFGQHCE. The region spanning 2012–2044 is the EGF-like 7; calcium-binding domain; sequence HRMDQQCPRGWWGSPTCGPCNCDVHKGFDPNCN. A glycan (N-linked (GlcNAc...) asparagine) is linked at Asn-2044. The region spanning 2046-2081 is the EGF-like 8; calcium-binding domain; it reads TSGQCHCKEFHYRPRGSDSCLPCDCYPVGSTSRSCA. Intrachain disulfides connect Cys-2050–Cys-2065, Cys-2052–Cys-2068, Cys-2070–Cys-2080, Cys-2089–Cys-2098, and Cys-2101–Cys-2113. Residues 2068-2115 enclose the Laminin EGF-like domain; that stretch reads CDCYPVGSTSRSCAPHSGQCPCRPGALGRQCNSCDSPFAEVTASGCRV. Tyr-2117 carries the phosphotyrosine modification. Residues Asn-2173, Asn-2192, Asn-2382, Asn-2472, and Asn-2504 are each glycosylated (N-linked (GlcNAc...) asparagine). The tract at residues 2356-2395 is disordered; sequence HTHVLLPSQSPQPSPSEVLPTSSNAENATASGVVSPPAPL. In terms of domain architecture, GAIN-B spans 2364 to 2528; that stretch reads QSPQPSPSEV…GVLMDASPRE (165 aa). A compositionally biased stretch (polar residues) spans 2374-2387; that stretch reads LPTSSNAENATASG. 2 disulfide bridges follow: Cys-2478–Cys-2510 and Cys-2498–Cys-2512. A GPS region spans residues 2478–2528; sequence CVQWDPPGPADQHGMWTARDCELVHRNGSHARCRCSRTGTFGVLMDASPRE. Residues 2539-2559 traverse the membrane as a helical segment; the sequence is VFTHVVVAASVTALVLTAAVL. Over 2560 to 2570 the chain is Cytoplasmic; that stretch reads LSLRSLKSNVR. A helical transmembrane segment spans residues 2571-2591; that stretch reads GIHANVAAALGVAELLFLLGI. The Extracellular portion of the chain corresponds to 2592–2599; the sequence is HRTHNQLL. A helical membrane pass occupies residues 2600–2620; the sequence is CTVVAILLHYFFLSTFAWLLV. The Cytoplasmic portion of the chain corresponds to 2621–2641; the sequence is QGLHLYRMQVEPRNVDRGAMR. The chain crosses the membrane as a helical span at residues 2642–2662; sequence FYHALGWGVPAVLLGLAVGLD. Residues 2663 to 2679 lie on the Extracellular side of the membrane; it reads PEGYGNPDFCWISIHEP. The chain crosses the membrane as a helical span at residues 2680-2700; it reads LIWSFAGPIVLVIVMNGIMFL. Residues 2701–2724 lie on the Cytoplasmic side of the membrane; sequence LAARTSCSTGQREAKKTSVLRTLR. A helical membrane pass occupies residues 2725–2745; the sequence is SSFLLLLLVSASWLFGLLAVN. The Extracellular portion of the chain corresponds to 2746–2752; it reads HSVLAFH. The helical transmembrane segment at 2753–2773 threads the bilayer; sequence YLHAGLCGLQGLAVLLLFCVL. The Cytoplasmic portion of the chain corresponds to 2774-3313; that stretch reads NADARAAWTP…SEVPRSEGHS (540 aa). 2 disordered regions span residues 2887–2927 and 2977–3004; these read AGAD…RPLR and SNKDAANNNQPELALTSGDETSLGRAQR. Positions 2889–2899 are enriched in acidic residues; the sequence is ADSDSDSDLSL. A compositionally biased stretch (basic residues) spans 2918–2927; that stretch reads TRGRFQRPLR. Position 3050 is a phosphotyrosine (Tyr-3050). Disordered stretches follow at residues 3091 to 3242 and 3255 to 3313; these read APVL…PSTE and NSSA…EGHS. Ser-3098 is subject to Phosphoserine. Over residues 3102–3119 the composition is skewed to basic and acidic residues; it reads SQERLDTAPARLEPRDRG. Composition is skewed to low complexity over residues 3178–3197 and 3255–3289; these read QRPLSRDPLLPSRPLDSLSR and NSSALSSVQSSSTPSGPHTTATPSATASALGPSTP. Polar residues predominate over residues 3290-3301; sequence RSATSHSISELS.

The protein belongs to the G-protein coupled receptor 2 family. LN-TM7 subfamily. The iron and 2-oxoglutarate dependent 3-hydroxylation of aspartate and asparagine is (R) stereospecific within EGF domains. In terms of tissue distribution, expressed in the brain. Expressed in cerebellum, olfactory bulb, cerebral cortex, hippocampus and brain stem.

The protein resides in the cell membrane. Receptor that may have an important role in cell/cell signaling during nervous system formation. This is Cadherin EGF LAG seven-pass G-type receptor 3 (Celsr3) from Rattus norvegicus (Rat).